The sequence spans 433 residues: Tyrosine--tRNA ligase (433 aa).

Tyr-34 provides a ligand contact to L-tyrosine. Positions 39 to 48 (PTASSLHVGS) match the 'HIGH' region motif. Residues Tyr-169 and Gln-173 each coordinate L-tyrosine. The short motif at 229 to 233 (KMGKT) is the 'KMSKS' region element. An ATP-binding site is contributed by Lys-232. The region spanning 364 to 432 (IPAFVLFHTV…RYHTIVVRKG (69 aa)) is the S4 RNA-binding domain.

This sequence belongs to the class-I aminoacyl-tRNA synthetase family. TyrS type 1 subfamily. As to quaternary structure, homodimer.

Its subcellular location is the cytoplasm. It catalyses the reaction tRNA(Tyr) + L-tyrosine + ATP = L-tyrosyl-tRNA(Tyr) + AMP + diphosphate + H(+). Its function is as follows. Catalyzes the attachment of tyrosine to tRNA(Tyr) in a two-step reaction: tyrosine is first activated by ATP to form Tyr-AMP and then transferred to the acceptor end of tRNA(Tyr). The protein is Tyrosine--tRNA ligase of Desulfosudis oleivorans (strain DSM 6200 / JCM 39069 / Hxd3) (Desulfococcus oleovorans).